The primary structure comprises 183 residues: TATA-box-binding protein 1 (183 aa).

2 consecutive repeat copies span residues 8-84 (IENV…AKKL) and 99-177 (VQNI…RQQL).

This sequence belongs to the TBP family.

Its function is as follows. General factor that plays a role in the activation of archaeal genes transcribed by RNA polymerase. Binds specifically to the TATA box promoter element which lies close to the position of transcription initiation. The chain is TATA-box-binding protein 1 from Methanosarcina acetivorans (strain ATCC 35395 / DSM 2834 / JCM 12185 / C2A).